We begin with the raw amino-acid sequence, 402 residues long: Deacetylase Oant_2987 (402 aa).

The Zn(2+) site is built by His-70, His-72, Lys-168, His-201, His-224, and Asp-284. Lys-168 bears the N6-carboxylysine mark.

This sequence belongs to the metallo-dependent hydrolases superfamily. Atu3266/EF_0837 deacetylase family. Requires Zn(2+) as cofactor.

In terms of biological role, esterase that catalyzes the deacetylation of acetyl-(R)-mandelate (in vitro). Can also hydrolyze acetyl glycolate, but with lower efficiency. Has very low N-acetyl-D-amino acid deacetylase activity with N-acetyl-D-serine and N-acetyl-D-threonine (in vitro). Theoretical substrate docking studies suggest that other N-acetylated amino acids may optimally occupy the active site and may in fact be the physiological substrates. This is Deacetylase Oant_2987 from Brucella anthropi (strain ATCC 49188 / DSM 6882 / CCUG 24695 / JCM 21032 / LMG 3331 / NBRC 15819 / NCTC 12168 / Alc 37) (Ochrobactrum anthropi).